Reading from the N-terminus, the 320-residue chain is Dual oxidase maturation factor 2 (320 aa).

The chain crosses the membrane as a helical span at residues 22-42; it reads VPLLIVILVFLSLAASFLFIL. Residues 43-51 lie on the Cytoplasmic side of the membrane; the sequence is PGIRGHSRW. The chain crosses the membrane as a helical span at residues 52 to 72; sequence FWLVRVLLSLFIGAEIVAVHF. The Extracellular segment spans residues 73-183; sequence SGDWFVGRVW…HLAGHYAAAT (111 aa). N-linked (GlcNAc...) asparagine glycosylation is found at asparagine 84, asparagine 109, and asparagine 121. The chain crosses the membrane as a helical span at residues 184-204; it reads LWVAFCFWIIANALLSMPAPL. At 205–206 the chain is on the cytoplasmic side; sequence YG. Residues 207–227 traverse the membrane as a helical segment; the sequence is GLALLTTGAFTLFGVFAFASI. The Extracellular segment spans residues 228–249; it reads SSVPLCHFRLGSAVLTPYYGAS. Residues 250–270 form a helical membrane-spanning segment; the sequence is FWLTLATGILSLLLGGAVVIL. Residues 271–320 are Cytoplasmic-facing; sequence HYTRPSALRSFLDLSVKDCSNQAKGNSPLTLNNPQHEQLKSPDLNITTLL.

Belongs to the DUOXA family. Heterodimer with DUXA2; disulfide-linked. Interacts with CSNK1G2. N-glycosylated.

The protein resides in the endoplasmic reticulum membrane. Functionally, required for the maturation and the transport from the endoplasmic reticulum to the plasma membrane of functional DUOX2. May play a role in thyroid hormone synthesis. This is Dual oxidase maturation factor 2 (Duoxa2) from Mus musculus (Mouse).